The sequence spans 360 residues: Photosystem II protein D1 2 (360 aa).

Helical transmembrane passes span Y29–T46, H118–L133, and W142–A156. Residue H118 participates in chlorophyll a binding. Y126 is a pheophytin a binding site. Positions 170 and 189 each coordinate [CaMn4O5] cluster. A helical transmembrane segment spans residues F197–L218. A chlorophyll a-binding site is contributed by H198. A quinone contacts are provided by residues H215 and S264–F265. H215 serves as a coordination point for Fe cation. Fe cation is bound at residue H272. A helical membrane pass occupies residues F274–L288. Residues H332, E333, D342, and A344 each contribute to the [CaMn4O5] cluster site. Residues A345–G360 constitute a propeptide that is removed on maturation.

The protein belongs to the reaction center PufL/M/PsbA/D family. PSII is composed of 1 copy each of membrane proteins PsbA, PsbB, PsbC, PsbD, PsbE, PsbF, PsbH, PsbI, PsbJ, PsbK, PsbL, PsbM, PsbT, PsbX, PsbY, PsbZ, Psb30/Ycf12, peripheral proteins PsbO, CyanoQ (PsbQ), PsbU, PsbV and a large number of cofactors. It forms dimeric complexes. The D1/D2 heterodimer binds P680, chlorophylls that are the primary electron donor of PSII, and subsequent electron acceptors. It shares a non-heme iron and each subunit binds pheophytin, quinone, additional chlorophylls, carotenoids and lipids. D1 provides most of the ligands for the Mn4-Ca-O5 cluster of the oxygen-evolving complex (OEC). There is also a Cl(-1) ion associated with D1 and D2, which is required for oxygen evolution. The PSII complex binds additional chlorophylls, carotenoids and specific lipids. is required as a cofactor. Post-translationally, tyr-161 forms a radical intermediate that is referred to as redox-active TyrZ, YZ or Y-Z. C-terminally processed by CtpA; processing is essential to allow assembly of the oxygen-evolving complex and thus photosynthetic growth.

The protein localises to the cellular thylakoid membrane. It catalyses the reaction 2 a plastoquinone + 4 hnu + 2 H2O = 2 a plastoquinol + O2. Photosystem II (PSII) is a light-driven water:plastoquinone oxidoreductase that uses light energy to abstract electrons from H(2)O, generating O(2) and a proton gradient subsequently used for ATP formation. It consists of a core antenna complex that captures photons, and an electron transfer chain that converts photonic excitation into a charge separation. The D1/D2 (PsbA/PsbD) reaction center heterodimer binds P680, the primary electron donor of PSII as well as several subsequent electron acceptors. The polypeptide is Photosystem II protein D1 2 (Nostoc sp. (strain PCC 7120 / SAG 25.82 / UTEX 2576)).